The sequence spans 110 residues: Parvalbumin alpha (110 aa).

N-acetylserine is present on Ser2. Phosphoserine is present on residues Ser2, Ser8, and Ser24. 2 EF-hand domains span residues 39 to 74 (KNPD…FSSD) and 78 to 110 (LSAK…VAES). Positions 52, 54, 56, 58, 60, 63, 91, 93, 95, 97, and 102 each coordinate Ca(2+).

Expressed in the modiolar nerve root (at protein level).

Functionally, in muscle, parvalbumin is thought to be involved in relaxation after contraction. It binds two calcium ions. This chain is Parvalbumin alpha (Pvalb), found in Mus musculus (Mouse).